We begin with the raw amino-acid sequence, 337 residues long: Protein ABHD13 (337 aa).

A helical; Signal-anchor for type II membrane protein transmembrane segment spans residues 30-50 (LLALILTFHLYGGFVLLGLIL). Catalysis depends on charge relay system residues S193, D268, and H298. Residue N299 is glycosylated (N-linked (GlcNAc...) asparagine).

It belongs to the serine esterase family.

The protein localises to the membrane. This chain is Protein ABHD13, found in Danio rerio (Zebrafish).